Consider the following 266-residue polypeptide: UPF0294 protein YafD (266 aa).

This sequence belongs to the UPF0294 family.

It is found in the cytoplasm. In Escherichia coli O157:H7, this protein is UPF0294 protein YafD (yafD).